We begin with the raw amino-acid sequence, 496 residues long: tRNA modification GTPase mss1, mitochondrial (496 aa).

A mitochondrion-targeting transit peptide spans 1 to 19 (MRILNRVFLNTFQACFRRF). The TrmE-type G domain occupies 239 to 416 (GINVAILGPS…FLQALSSTFE (178 aa)). GTP-binding positions include 246 to 253 (GPSNAGKS), 293 to 297 (DTAGL), and 363 to 366 (NKVD).

It belongs to the TRAFAC class TrmE-Era-EngA-EngB-Septin-like GTPase superfamily. TrmE GTPase family.

It localises to the mitochondrion. Its function is as follows. GTPase involved in the 5-carboxymethylaminomethyl modification (mnm(5)s(2)U34) of the wobble uridine base in mitochondrial tRNAs. In Schizosaccharomyces pombe (strain 972 / ATCC 24843) (Fission yeast), this protein is tRNA modification GTPase mss1, mitochondrial (mss1).